Reading from the N-terminus, the 265-residue chain is Apolipoprotein A-I (265 aa).

The first 18 residues, M1–A18, serve as a signal peptide directing secretion. A run of 2 repeats spans residues L67–G88 and P89–N110. The interval L67–Q265 is 10 X approximate tandem repeats. A Methionine sulfoxide modification is found at M109. A 3; half-length repeat occupies K111–Q121. Repeat copies occupy residues P122 to V142, P144 to T165, P166 to A187, P188 to G209, and S210 to K230. One copy of the 9; half-length repeat lies at P231–V241. Repeat 10 spans residues P242–Q265.

This sequence belongs to the apolipoprotein A1/A4/E family. Homodimer. Interacts with APOA1BP and CLU. Component of a sperm activating protein complex (SPAP), consisting of APOA1, an immunoglobulin heavy chain, an immunoglobulin light chain and albumin. Interacts with NDRG1. Interacts with SCGB3A2. Interacts with NAXE and YJEFN3. In terms of processing, glycosylated. Post-translationally, palmitoylated. Phosphorylation sites are present in the extracellular medium. In terms of tissue distribution, major protein of plasma HDL, also found in chylomicrons.

It localises to the secreted. Functionally, participates in the reverse transport of cholesterol from tissues to the liver for excretion by promoting cholesterol efflux from tissues and by acting as a cofactor for the lecithin cholesterol acyltransferase (LCAT). As part of the SPAP complex, activates spermatozoa motility. In Tursiops truncatus (Atlantic bottle-nosed dolphin), this protein is Apolipoprotein A-I (APOA1).